Consider the following 39-residue polypeptide: Cytochrome b559 subunit beta (39 aa).

The chain crosses the membrane as a helical span at residues 14 to 30 (WLAIHGLAVPTVFFLGS). Histidine 18 is a heme binding site.

It belongs to the PsbE/PsbF family. As to quaternary structure, heterodimer of an alpha subunit and a beta subunit. PSII is composed of 1 copy each of membrane proteins PsbA, PsbB, PsbC, PsbD, PsbE, PsbF, PsbH, PsbI, PsbJ, PsbK, PsbL, PsbM, PsbT, PsbX, PsbY, PsbZ, Psb30/Ycf12, at least 3 peripheral proteins of the oxygen-evolving complex and a large number of cofactors. It forms dimeric complexes. The cofactor is heme b.

Its subcellular location is the plastid. The protein localises to the chloroplast thylakoid membrane. Functionally, this b-type cytochrome is tightly associated with the reaction center of photosystem II (PSII). PSII is a light-driven water:plastoquinone oxidoreductase that uses light energy to abstract electrons from H(2)O, generating O(2) and a proton gradient subsequently used for ATP formation. It consists of a core antenna complex that captures photons, and an electron transfer chain that converts photonic excitation into a charge separation. In Ephedra sinica (Chinese ephedra), this protein is Cytochrome b559 subunit beta.